Consider the following 525-residue polypeptide: Vesicular inhibitory amino acid transporter (525 aa).

At 1–132 (MATLLRSKLT…WNVTNAIQGM (132 aa)) the chain is on the cytoplasmic side. A helical transmembrane segment spans residues 133–153 (FVLGLPYAILHGGYLGLFLII). The Lumenal, vesicle segment spans residues 154–204 (FAAVVCCYTGKILIACLYEENEDGEVVRVRDSYVAIANACCAPRFPTLGGR). At tyrosine 186 the chain carries 3'-nitrotyrosine. Residues 205–225 (VVNVAQIIELVMTCILYVVVS) traverse the membrane as a helical segment. At 226 to 265 (GNLMYNSFPGLPVSQKSWSIIATAVLLPCAFLKNLKAVSK) the chain is on the cytoplasmic side. Residues 266-286 (FSLLCTLAHFVINILVIAYCL) traverse the membrane as a helical segment. Residues 287–305 (SRARDWAWEKVKFYIDVKK) are Lumenal, vesicle-facing. A helical membrane pass occupies residues 306-326 (FPISIGIIVFSYTSQIFLPSL). Topologically, residues 327-341 (EGNMQQPSEFHCMMN) are cytoplasmic. The chain crosses the membrane as a helical span at residues 342-362 (WTHIAACVLKGLFALVAYLTW). Topologically, residues 363-383 (ADETKEVITDNLPGSIRAVVN) are lumenal, vesicle. A helical transmembrane segment spans residues 384–404 (LFLVAKALLSYPLPFFAAVEV). Residues 405–438 (LEKSLFQEGSRAFFPACYGGDGRLKSWGLTLRCA) are Cytoplasmic-facing. The chain crosses the membrane as a helical span at residues 439–459 (LVVFTLLMAIYVPHFALLMGL). At 460–461 (TG) the chain is on the lumenal, vesicle side. A helical membrane pass occupies residues 462–482 (SLTGAGLCFLLPSLFHLRLLW). At 483-489 (RKLLWHQ) the chain is on the cytoplasmic side. The helical transmembrane segment at 490 to 510 (VFFDVAIFVIGGICSVSGFVH) threads the bilayer. Over 511–525 (SLEGLIEAYRTNAED) the chain is Lumenal, vesicle.

Belongs to the amino acid/polyamine transporter 2 family. In terms of tissue distribution, brain and retina. Localized in horizontal cell tips at both rod and cone terminals.

Its subcellular location is the cytoplasmic vesicle membrane. It localises to the presynapse. It carries out the reaction 4-aminobutanoate(out) + n H(+)(in) = 4-aminobutanoate(in) + n H(+)(out). The enzyme catalyses glycine(out) + n H(+)(in) = glycine(in) + n H(+)(out). It catalyses the reaction beta-alanine(out) + n H(+)(in) = beta-alanine(in) + n H(+)(out). Its activity is regulated as follows. Chloride ions activate 4-aminobutanoate/H(+) transport. Antiporter that exchanges vesicular protons for cytosolic 4-aminobutanoate or to a lesser extend glycine, thus allowing their secretion from nerve terminals. The transport is equally dependent on the chemical and electrical components of the proton gradient. May also transport beta-alanine. Acidification of GABAergic synaptic vesicles is a prerequisite for 4-aminobutanoate uptake. The polypeptide is Vesicular inhibitory amino acid transporter (Mus musculus (Mouse)).